Here is a 200-residue protein sequence, read N- to C-terminus: MALSVMCLGLALLGVLQSQAQDSTQNLIPAPSLLTVPLQPDFRSDQFRGRWYVVGLAGNAVQKKTEGSFTMYSTIYELQENNSYNVTSILVRDQDQGCRYWIRTFVPSSRAGQFTLGNMHRYPQVQSYNVQVATTDYNQFAMVFFRKTSENKQYFKITLYGRTKELSPELKERFTRFAKSLGLKDDNIIFSVPTDQCIDN.

The first 20 residues, 1–20 (MALSVMCLGLALLGVLQSQA), serve as a signal peptide directing secretion. Gln-21 carries the post-translational modification Pyrrolidone carboxylic acid. Residue 72 to 74 (YST) coordinates a carboxymycobactin. 2 N-linked (GlcNAc...) asparagine glycosylation sites follow: Asn-81 and Asn-85. Cys-98 and Cys-197 are disulfide-bonded. An enterobactin-binding site is contributed by Tyr-128. The a carboxymycobactin site is built by Lys-147, Lys-156, and Tyr-160. Residue Lys-156 participates in enterobactin binding.

It belongs to the calycin superfamily. Lipocalin family. In terms of assembly, monomer. Homodimer; disulfide-linked. Heterodimer; disulfide-linked with MMP9. In terms of processing, N-glycosylated. In terms of tissue distribution, expressed in the cortical tubules of the kidney (at protein level). Also expressed in the medullary tubules of the kidney. Detected in lung, spleen, uterus, vagina and epididymis.

The protein localises to the secreted. The protein resides in the cytoplasmic granule lumen. Its subcellular location is the cytoplasmic vesicle lumen. In terms of biological role, iron-trafficking protein involved in multiple processes such as apoptosis, innate immunity and renal development. Binds iron through association with 2,3-dihydroxybenzoic acid (2,3-DHBA), a siderophore that shares structural similarities with bacterial enterobactin, and delivers or removes iron from the cell, depending on the context. Iron-bound form (holo-24p3) is internalized following binding to the SLC22A17 (24p3R) receptor, leading to release of iron and subsequent increase of intracellular iron concentration. In contrast, association of the iron-free form (apo-24p3) with the SLC22A17 (24p3R) receptor is followed by association with an intracellular siderophore, iron chelation and iron transfer to the extracellular medium, thereby reducing intracellular iron concentration. Involved in apoptosis due to interleukin-3 (IL3) deprivation: iron-loaded form increases intracellular iron concentration without promoting apoptosis, while iron-free form decreases intracellular iron levels, inducing expression of the proapoptotic protein BCL2L11/BIM, resulting in apoptosis. Involved in innate immunity; limits bacterial proliferation by sequestering iron bound to microbial siderophores, such as enterobactin. Can also bind siderophores from M.tuberculosis. The polypeptide is Neutrophil gelatinase-associated lipocalin (Lcn2) (Mus musculus (Mouse)).